An 83-amino-acid polypeptide reads, in one-letter code: Acylphosphatase (83 aa).

The Acylphosphatase-like domain maps to 1–83; that stretch reads MIEGRVQRVG…TGDDWFEVRY (83 aa). Residues arginine 12 and asparagine 30 contribute to the active site.

Belongs to the acylphosphatase family.

The enzyme catalyses an acyl phosphate + H2O = a carboxylate + phosphate + H(+). The protein is Acylphosphatase (acyP) of Synechococcus sp. (strain CC9605).